The primary structure comprises 1430 residues: Death-associated protein kinase 1 (1430 aa).

A Protein kinase domain is found at 13-275; that stretch reads YDTGEELGSG…IQDSLQHPWI (263 aa). Residues 19 to 27, Lys42, 94 to 96, and Glu100 each bind ATP; these read LGSGQFAVV and ELV. Asp139 functions as the Proton acceptor in the catalytic mechanism. Asp161 serves as a coordination point for ATP. The tract at residues 267–334 is calmodulin-binding; the sequence is QDSLQHPWIK…RSNMSVARSD (68 aa). The residue at position 289 (Ser289) is a Phosphoserine; by RPS6KA1 and RPS6KA3. The interval 292 to 301 is autoinhibitory domain; that stretch reads NMEKFKKFAA. A Phosphoserine; by autocatalysis modification is found at Ser308. Ser319 and Ser333 each carry phosphoserine. ANK repeat units follow at residues 378–407, 411–440, 444–473, 477–506, 510–539, 543–572, 576–605, and 609–638; these read HGTP…RIDV, GGSN…PLDV, SGEM…NPNI, EEET…NVNI, EGET…DLNA, DGHI…FVDY, HGNT…NLDI, and YGRT…SVEA. Residues 681–955 form the Roc domain; the sequence is TQNLQPRIKL…NHLQEIRSQI (275 aa). Phosphoserine; by MAPK1 is present on Ser734. The stretch at 875–904 is one ANK 9 repeat; that stretch reads KLKNPLQVVLVATHADIMNVPRPAGGEFGY. Position 1115 is a phosphoserine (Ser1115). The stretch at 1162 to 1196 is one ANK 10 repeat; the sequence is EGDADIRLWVNGCKLANRGAELLVLLVNHGQGIEV. Positions 1312-1396 constitute a Death domain; sequence KLSRLLDPPD…DAADFLLKAS (85 aa).

This sequence belongs to the protein kinase superfamily. CAMK Ser/Thr protein kinase family. DAP kinase subfamily. In terms of assembly, interacts with KLHL20. Interacts (via death domain) with MAPK1 and MAPK3. Interacts with MAP1B (via N-terminus). Interacts with PRKD1 in an oxidative stress-regulated manner. Interacts with PIN1, PDCD6, BECN1, TSC2 and STX1A. Interacts (via kinase domain) with DAPK3 (via kinase domain). Interacts with GRINB. Interacts (via death domain) with UNC5B (via death domain). Interacts with UNC5C (via death domain). Mg(2+) serves as cofactor. Post-translationally, ubiquitinated by the BCR(KLHL20) E3 ubiquitin ligase complex, leading to its degradation by the proteasome. In terms of processing, removal of the C-terminal tail of isoform 2 (corresponding to amino acids 296-337 of isoform 2) by proteolytic cleavage stimulates maximally its membrane-blebbing function. In response to mitogenic stimulation (PMA or EGF), phosphorylated at Ser-289; phosphorylation suppresses DAPK1 pro-apoptotic function. Autophosphorylation at Ser-308 inhibits its catalytic activity. Phosphorylation at Ser-734 by MAPK1 increases its catalytic activity and promotes cytoplasmic retention of MAPK1. Endoplasmic-stress can cause dephosphorylation at Ser-308. Isoform 2 is expressed in normal intestinal tissue as well as in colorectal carcinomas.

Its subcellular location is the cytoplasm. It is found in the cytoskeleton. The catalysed reaction is L-seryl-[protein] + ATP = O-phospho-L-seryl-[protein] + ADP + H(+). The enzyme catalyses L-threonyl-[protein] + ATP = O-phospho-L-threonyl-[protein] + ADP + H(+). With respect to regulation, activated by Ca(2+)/calmodulin. Regulated by a locking mechanism, involving autophosphorylation at Ser-308 and calmodulin binding. In the inactive state, Ser-308 is phosphorylated. Activation involves its dephosphorylation and a release-of-autoinhibition mechanism where binding of calmodulin induces a conformational change that relieves the steric block of the active site by the autoinhibitory domain. Activity is modulated by UNC5B and NTN1. UNC5B activates it by inhibiting the phosphorylation at Ser-308, whereas NTN1 inhibits UNC5B-mediated activation of DAPK1. Endoplasmic-stress activates by causing Ser-308 dephosphorylation. In terms of biological role, calcium/calmodulin-dependent serine/threonine kinase involved in multiple cellular signaling pathways that trigger cell survival, apoptosis, and autophagy. Regulates both type I apoptotic and type II autophagic cell deaths signal, depending on the cellular setting. The former is caspase-dependent, while the latter is caspase-independent and is characterized by the accumulation of autophagic vesicles. Phosphorylates PIN1 resulting in inhibition of its catalytic activity, nuclear localization, and cellular function. Phosphorylates TPM1, enhancing stress fiber formation in endothelial cells. Phosphorylates STX1A and significantly decreases its binding to STXBP1. Phosphorylates PRKD1 and regulates JNK signaling by binding and activating PRKD1 under oxidative stress. Phosphorylates BECN1, reducing its interaction with BCL2 and BCL2L1 and promoting the induction of autophagy. Phosphorylates TSC2, disrupting the TSC1-TSC2 complex and stimulating mTORC1 activity in a growth factor-dependent pathway. Phosphorylates RPS6, MYL9 and DAPK3. Acts as a signaling amplifier of NMDA receptors at extrasynaptic sites for mediating brain damage in stroke. Cerebral ischemia recruits DAPK1 into the NMDA receptor complex and it phosphorylates GRINB at Ser-1303 inducing injurious Ca(2+) influx through NMDA receptor channels, resulting in an irreversible neuronal death. Required together with DAPK3 for phosphorylation of RPL13A upon interferon-gamma activation which is causing RPL13A involvement in transcript-selective translation inhibition. Isoform 2 cannot induce apoptosis but can induce membrane blebbing. This chain is Death-associated protein kinase 1 (DAPK1), found in Homo sapiens (Human).